The sequence spans 418 residues: MRPQATLTVMPVERPLVGRVSPPGSKSITNRALLLAGLAKGTSRLTGALKSDDTRVMSEALRLMGVQVDEPDDSTFVVTSSGHWQAPQQALFLGNAGTATRFLTAALANFEGDFVVDGDEYMRKRPIGPLVDALQRMGVEISAPSGCPPVAIKGKGGLQAGRIEIDGNLSSQYVSALLMAGACGKGSLEVALTGSEIGARGYVDLTLAAMQAFGAEVQAIGDAAWKVSATGYHATDFHIEPDASAATYLWAAQALTEGNIDLGVASDAFTQPDALASQIIDSFPNMPAVIDGSQMQDAIPTLAVLAAFNRQPVRFVGIANLRVKECDRISALCDGLCAIAPGLAVEEGDDLIVHANPALAGTTVNALIDTHSDHRIAMCFALAGLKIKGIHIQDPDCVAKTYPGYWDALASLGVSVQR.

Residues Lys26, Ser27, and Arg31 each contribute to the 3-phosphoshikimate site. Phosphoenolpyruvate is bound at residue Lys26. The phosphoenolpyruvate site is built by Gly97 and Arg125. Residues Ser170, Ser171, Gln172, Asp297, Asn320, and Lys324 each contribute to the 3-phosphoshikimate site. Gln172 is a phosphoenolpyruvate binding site. Residue Asp297 is the Proton acceptor of the active site. Residues Arg328, Arg375, and Lys400 each contribute to the phosphoenolpyruvate site.

Belongs to the EPSP synthase family. As to quaternary structure, monomer.

It localises to the cytoplasm. It catalyses the reaction 3-phosphoshikimate + phosphoenolpyruvate = 5-O-(1-carboxyvinyl)-3-phosphoshikimate + phosphate. The protein operates within metabolic intermediate biosynthesis; chorismate biosynthesis; chorismate from D-erythrose 4-phosphate and phosphoenolpyruvate: step 6/7. Functionally, catalyzes the transfer of the enolpyruvyl moiety of phosphoenolpyruvate (PEP) to the 5-hydroxyl of shikimate-3-phosphate (S3P) to produce enolpyruvyl shikimate-3-phosphate and inorganic phosphate. In Pseudomonas syringae pv. tomato (strain ATCC BAA-871 / DC3000), this protein is 3-phosphoshikimate 1-carboxyvinyltransferase.